The sequence spans 76 residues: MTLTFLLVVALCMLTTCHTENYRDSQKVSPVRSIGKTQFARSLRLSERYCVPKSGLCTIFQPGKCCSGWCLIYRCT.

The signal sequence occupies residues 1–19 (MTLTFLLVVALCMLTTCHT). A propeptide spanning residues 20–47 (ENYRDSQKVSPVRSIGKTQFARSLRLSE) is cleaved from the precursor. Disulfide bonds link cysteine 50/cysteine 66, cysteine 57/cysteine 70, and cysteine 65/cysteine 75.

Expressed by the venom duct.

It is found in the secreted. The polypeptide is Conotoxin Cl6.4 (Californiconus californicus (California cone)).